A 290-amino-acid polypeptide reads, in one-letter code: 4-hydroxy-tetrahydrodipicolinate synthase (290 aa).

Thr48 provides a ligand contact to pyruvate. The active-site Proton donor/acceptor is Tyr137. Catalysis depends on Lys165, which acts as the Schiff-base intermediate with substrate. Residue Ile206 coordinates pyruvate.

Belongs to the DapA family. Homotetramer; dimer of dimers.

It is found in the cytoplasm. It carries out the reaction L-aspartate 4-semialdehyde + pyruvate = (2S,4S)-4-hydroxy-2,3,4,5-tetrahydrodipicolinate + H2O + H(+). It functions in the pathway amino-acid biosynthesis; L-lysine biosynthesis via DAP pathway; (S)-tetrahydrodipicolinate from L-aspartate: step 3/4. Its function is as follows. Catalyzes the condensation of (S)-aspartate-beta-semialdehyde [(S)-ASA] and pyruvate to 4-hydroxy-tetrahydrodipicolinate (HTPA). The sequence is that of 4-hydroxy-tetrahydrodipicolinate synthase from Ligilactobacillus salivarius (strain UCC118) (Lactobacillus salivarius).